Consider the following 322-residue polypeptide: Ferredoxin--NADP reductase (322 aa).

The FAD site is built by Thr-12, Glu-31, Gln-39, Tyr-44, Ala-86, Phe-119, and Thr-317.

Belongs to the ferredoxin--NADP reductase type 2 family. Homodimer. It depends on FAD as a cofactor.

It catalyses the reaction 2 reduced [2Fe-2S]-[ferredoxin] + NADP(+) + H(+) = 2 oxidized [2Fe-2S]-[ferredoxin] + NADPH. The sequence is that of Ferredoxin--NADP reductase from Acholeplasma laidlawii (strain PG-8A).